A 1679-amino-acid chain; its full sequence is Probable myosin heavy chain ECU04_1000 (1679 aa).

Polar residues predominate over residues 1–14; the sequence is MEGTTNKDIGSGSS. Residues 1–22 are disordered; sequence MEGTTNKDIGSGSSRPGGEVSV. Positions 31–79 constitute a Myosin N-terminal SH3-like domain; the sequence is MEKKWVWAPSSKEAYVCGFVVKEEGDVLEIDCRGVIVRHKSCEVFRMNP. Residues 83 to 754 form the Myosin motor domain; the sequence is DMVDDLAELS…VLADIEDMRD (672 aa). 176-183 lines the ATP pocket; the sequence is GESGAGKT. Positions 624 to 646 are actin-binding; that stretch reads LASLMSELRRTNPHFVRCIIPNL. A coiled-coil region spans residues 823–1644; it reads GEMKEKEAMI…SKMLEMKKKL (822 aa).

This sequence belongs to the TRAFAC class myosin-kinesin ATPase superfamily. Myosin family.

In terms of biological role, cellular myosin that appears to play a role in cytokinesis, cell shape, and specialized functions such as secretion and capping. This Encephalitozoon cuniculi (strain GB-M1) (Microsporidian parasite) protein is Probable myosin heavy chain ECU04_1000.